The chain runs to 335 residues: tRNA methyltransferase 10 homolog A (335 aa).

Disordered stretches follow at residues 1 to 91 and 279 to 335; these read MSSE…DRKR and VPAH…PDPQ. Phosphoserine is present on residues Ser-22 and Ser-24. Positions 52–62 are enriched in basic and acidic residues; that stretch reads RLWEEQREQRK. Residues 52–84 are a coiled coil; the sequence is RLWEEQREQRKEKRKEKRKRKKLERRCQLESNS. Over residues 63 to 75 the composition is skewed to basic residues; the sequence is EKRKEKRKRKKLE. In terms of domain architecture, SAM-dependent MTase TRM10-type spans 88–279; the sequence is DRKRIRRHVA…TILPPRKGAV (192 aa). The span at 304-319 shows a compositional bias: basic and acidic residues; that stretch reads EGEHGRDDPGSPHKEQ. Low complexity predominate over residues 320 to 335; sequence QGQQSSSVSAVSPDPQ. A Phosphoserine modification is found at Ser-331.

The protein belongs to the class IV-like SAM-binding methyltransferase superfamily. TRM10 family. As to quaternary structure, interacts with tRNA. Ubiquitously expressed. Is more abundant in brain and pancreatic islets compared to other tissues (at protein level).

Its subcellular location is the nucleus. It is found in the nucleolus. It catalyses the reaction guanosine(9) in tRNA + S-adenosyl-L-methionine = N(1)-methylguanosine(9) in tRNA + S-adenosyl-L-homocysteine + H(+). Its function is as follows. S-adenosyl-L-methionine-dependent guanine N(1)-methyltransferase that catalyzes the formation of N(1)-methylguanine at position 9 (m1G9) in tRNAs. Probably not able to catalyze formation of N(1)-methyladenine at position 9 (m1A9) in tRNAs. The polypeptide is tRNA methyltransferase 10 homolog A (Trmt10a) (Rattus norvegicus (Rat)).